The sequence spans 445 residues: C-terminal-binding protein 2 (445 aa).

R22 carries the asymmetric dimethylarginine modification. NAD(+)-binding positions include S106, 186–191, D210, 243–249, 270–272, and D296; these read IGFGRT, CNLNEHN, and AAR. R272 is a catalytic residue. The active site involves E301. Catalysis depends on H321, which acts as the Proton donor. 321–324 is a binding site for NAD(+); sequence HTAW. The segment at 414-445 is disordered; the sequence is THNLPTVAHPSQAPSPNQPTKHGDNREHPNEQ. At S428 the chain carries Phosphoserine; by HIPK2. Basic and acidic residues predominate over residues 434-445; sequence KHGDNREHPNEQ.

Belongs to the D-isomer specific 2-hydroxyacid dehydrogenase family. As to quaternary structure, interacts with HIPK2 and PNN. Interacts with the transcription factors ZNF217, BKLF, delta EF1/AREB6/ZEB, EVI-1 and Friend of GATA (FOG) via the consensus motif P-X-[DNS]-L-[STVA]. Also interacts with the C-terminus of adenovirus E1A protein. Can form a complex with BKLF on a CACCC-box oligonucleotide. Can form homodimers or heterodimers of CTBP1 and CTBP2. Interacts with NRIP1 and WIZ. Interacts with PRDM16; represses white adipose tissue (WAT)-specific genes expression. Interacts with MCRIP1. Phosphorylation by HIPK2 on Ser-428 induces proteasomal degradation. Found in all tissues except spleen and liver.

The protein localises to the nucleus. The protein resides in the synapse. In terms of biological role, corepressor targeting diverse transcription regulators. Isoform 2 probably acts as a scaffold for specialized synapses. Functions in brown adipose tissue (BAT) differentiation. The chain is C-terminal-binding protein 2 (Ctbp2) from Mus musculus (Mouse).